Consider the following 141-residue polypeptide: Nucleoside diphosphate kinase (141 aa).

6 residues coordinate ATP: K11, F59, R87, T93, R104, and N114. H117 functions as the Pros-phosphohistidine intermediate in the catalytic mechanism.

This sequence belongs to the NDK family. In terms of assembly, homotetramer. Mg(2+) serves as cofactor.

It localises to the cytoplasm. The catalysed reaction is a 2'-deoxyribonucleoside 5'-diphosphate + ATP = a 2'-deoxyribonucleoside 5'-triphosphate + ADP. The enzyme catalyses a ribonucleoside 5'-diphosphate + ATP = a ribonucleoside 5'-triphosphate + ADP. Functionally, major role in the synthesis of nucleoside triphosphates other than ATP. The ATP gamma phosphate is transferred to the NDP beta phosphate via a ping-pong mechanism, using a phosphorylated active-site intermediate. This chain is Nucleoside diphosphate kinase, found in Serratia proteamaculans (strain 568).